The sequence spans 208 residues: Guanylate kinase (208 aa).

In terms of domain architecture, Guanylate kinase-like spans 4–185 (GNLYILSAPS…TLKDLQSILQ (182 aa)). 11-18 (APSGAGKS) is a binding site for ATP.

The protein belongs to the guanylate kinase family.

Its subcellular location is the cytoplasm. It carries out the reaction GMP + ATP = GDP + ADP. Functionally, essential for recycling GMP and indirectly, cGMP. The polypeptide is Guanylate kinase (Haemophilus influenzae (strain 86-028NP)).